Consider the following 163-residue polypeptide: Cytochrome b6-f complex subunit 4 (163 aa).

The next 3 membrane-spanning stretches (helical) occupy residues 36 to 56, 95 to 115, and 131 to 151; these read LLYI…GLAV, LLGV…PFLE, and TVFL…TLPI.

It belongs to the cytochrome b family. PetD subfamily. In terms of assembly, the 4 large subunits of the cytochrome b6-f complex are cytochrome b6, subunit IV (17 kDa polypeptide, petD), cytochrome f and the Rieske protein, while the 4 small subunits are petG, petL, petM and petN. The complex functions as a dimer.

It is found in the plastid. It localises to the chloroplast thylakoid membrane. Functionally, component of the cytochrome b6-f complex, which mediates electron transfer between photosystem II (PSII) and photosystem I (PSI), cyclic electron flow around PSI, and state transitions. The protein is Cytochrome b6-f complex subunit 4 of Phalaenopsis aphrodite subsp. formosana (Moth orchid).